We begin with the raw amino-acid sequence, 518 residues long: Lycopene epsilon cyclase, chloroplastic (518 aa).

NAD(+) is bound at residue 100-128 (LIVIGCGPAGMSLAAEAGKRGLSVGLIGP). Transmembrane regions (helical) follow at residues 435–455 (FFLF…RIFF) and 469–489 (FLGS…MFAI).

Belongs to the lycopene cyclase family. As to expression, expressed in leaves and roots. Detected in flower buds and lips.

Its subcellular location is the plastid. The protein resides in the chloroplast membrane. The catalysed reaction is a carotenoid psi-end group = a carotenoid epsilon-end group. The protein operates within carotenoid biosynthesis; alpha-zeacarotene biosynthesis. Its pathway is carotenoid biosynthesis; delta-carotene biosynthesis. In terms of biological role, catalyzes the single epsilon-cyclization reaction which converts lycopene to delta-carotene and neurosporene to alpha-zeacarotene. Required for lutein biosynthesis. The chain is Lycopene epsilon cyclase, chloroplastic from Oncidium hybrid cultivar (Orchid).